A 175-amino-acid polypeptide reads, in one-letter code: Avenin-like a3 (175 aa).

Positions 1-19 (MKTMFLLALLAFTATSAVA) are cleaved as a signal peptide.

The protein belongs to the prolamin family. Contains 7 disulfide bonds.

Its function is as follows. Seed storage protein. Not integrated in the gluten polymer through disulfide bonds, unless incorporated by reduction and reoxidation during dough making. Increases dough strength and bread volume, but decreases dough stability when added into a base wheat flour. The protein is Avenin-like a3 of Triticum aestivum (Wheat).